Consider the following 274-residue polypeptide: Energy-coupling factor transporter ATP-binding protein EcfA1 (274 aa).

In terms of domain architecture, ABC transporter spans 11-245 (IELKNVKFKY…ERVIEIAKID (235 aa)). 45–52 (GHNGSGKS) provides a ligand contact to ATP.

Belongs to the ABC transporter superfamily. Energy-coupling factor EcfA family. Forms a stable energy-coupling factor (ECF) transporter complex composed of 2 membrane-embedded substrate-binding proteins (S component), 2 ATP-binding proteins (A component) and 2 transmembrane proteins (T component).

It localises to the cell membrane. In terms of biological role, ATP-binding (A) component of a common energy-coupling factor (ECF) ABC-transporter complex. Unlike classic ABC transporters this ECF transporter provides the energy necessary to transport a number of different substrates. The sequence is that of Energy-coupling factor transporter ATP-binding protein EcfA1 from Mycoplasma mobile (strain ATCC 43663 / 163K / NCTC 11711) (Mesomycoplasma mobile).